The following is a 1028-amino-acid chain: Isoleucine--tRNA ligase (1028 aa).

Positions 51–61 (PTANGRPHIGH) match the 'HIGH' region motif. A 'KMSKS' region motif is present at residues 591-595 (KMSKS). Lysine 594 contacts ATP.

It belongs to the class-I aminoacyl-tRNA synthetase family. IleS type 2 subfamily. Monomer. Zn(2+) is required as a cofactor.

It is found in the cytoplasm. The enzyme catalyses tRNA(Ile) + L-isoleucine + ATP = L-isoleucyl-tRNA(Ile) + AMP + diphosphate. In terms of biological role, catalyzes the attachment of isoleucine to tRNA(Ile). As IleRS can inadvertently accommodate and process structurally similar amino acids such as valine, to avoid such errors it has two additional distinct tRNA(Ile)-dependent editing activities. One activity is designated as 'pretransfer' editing and involves the hydrolysis of activated Val-AMP. The other activity is designated 'posttransfer' editing and involves deacylation of mischarged Val-tRNA(Ile). This chain is Isoleucine--tRNA ligase, found in Thermoplasma volcanium (strain ATCC 51530 / DSM 4299 / JCM 9571 / NBRC 15438 / GSS1).